A 736-amino-acid chain; its full sequence is Serine/threonine-protein kinase BRSK2 (736 aa).

Residues 19 to 270 (YRLEKTLGKG…LEHIQKHIWY (252 aa)) form the Protein kinase domain. Residues 25-33 (LGKGQTGLV) and lysine 48 contribute to the ATP site. Aspartate 141 (proton acceptor) is an active-site residue. At threonine 174 the chain carries Phosphothreonine; by LKB1. At threonine 260 the chain carries Phosphothreonine; by PKA. Serine 294 carries the post-translational modification Phosphoserine. Residues 297–339 (DIDPDVLDSMHSLGCFRDRNKLLQDLLSEEENQEKMIYFLLLD) form the UBA domain. The span at 345–366 (PSQEDEDLPPRNEIDPPRKRVD) shows a compositional bias: basic and acidic residues. 2 disordered regions span residues 345–475 (PSQE…GVPW) and 493–513 (HRRK…PESS). 7 positions are modified to phosphoserine: serine 367, serine 382, serine 393, serine 412, alanine 416, serine 423, and serine 427. A compositionally biased stretch (low complexity) spans 410–428 (SRSISGASSGLSTSPLSSP). The span at 431–445 (TPHPSPRGSPLPTPK) shows a compositional bias: pro residues. Position 455 is a phosphoserine (serine 455). Phosphothreonine is present on residues threonine 459, threonine 463, and threonine 509. Residues serine 512, serine 513, and serine 520 each carry the phosphoserine modification. Positions 603-605 (KEN) match the KEN box motif. Residues 681 to 736 (KNGQAAQAPSTPAKRSAHGPLGDSAAAGPGPGGDAEYPTGKDTAKMGPPTARREQP) form a disordered region. Residues 699–708 (GPLGDSAAAG) are compositionally biased toward low complexity.

The protein belongs to the protein kinase superfamily. CAMK Ser/Thr protein kinase family. SNF1 subfamily. Interacts with FZR1, a regulatory subunit of the APC ubiquitin ligase complex. Interacts with COPS5. Interacts with PAK1. The cofactor is Mg(2+). In terms of processing, phosphorylated at Thr-174 by STK11/LKB1 in complex with STE20-related adapter-alpha (STRADA) pseudo kinase and CAB39. Not phosphorylated at Thr-174 by CaMKK2. In contrast, it is phosphorylated and activated by CaMKK1. May be inactivated via dephosphorylation of Thr-174 by PP2C. Phosphorylated at Thr-260 by PKA. Phosphorylation at Thr-260 by PKA was not observed in another study, but this may reflect differences in the experimental approach. Phosphorylation at Thr-260 seems to play a role in the regulation of insulin secretion. Polyubiquitinated by the APC complex in conjunction with FZR1, leading to its proteasomal degradation. Targeted for proteasomal degradation by interaction with COPS5. BRSK2 levels change during the cell cycle. BRSK2 levels are low at the G1/S boundary and gradually increase as cells progress into G2 phase. BRSK2 levels decrease rapidly at the end of mitosis. Detected in pancreas islets (at protein level).

It localises to the cytoplasm. The protein resides in the cytoskeleton. It is found in the microtubule organizing center. Its subcellular location is the centrosome. The protein localises to the perinuclear region. It localises to the endoplasmic reticulum. The catalysed reaction is L-seryl-[protein] + ATP = O-phospho-L-seryl-[protein] + ADP + H(+). It catalyses the reaction L-threonyl-[protein] + ATP = O-phospho-L-threonyl-[protein] + ADP + H(+). The enzyme catalyses L-seryl-[tau protein] + ATP = O-phospho-L-seryl-[tau protein] + ADP + H(+). It carries out the reaction L-threonyl-[tau protein] + ATP = O-phospho-L-threonyl-[tau protein] + ADP + H(+). Its activity is regulated as follows. Activated by phosphorylation on Thr-174 by STK11/LKB1. Serine/threonine-protein kinase that plays a key role in polarization of neurons and axonogenesis, cell cycle progress and insulin secretion. Phosphorylates CDK16, CDC25C, MAPT/TAU, PAK1 and WEE1. Following phosphorylation and activation by STK11/LKB1, acts as a key regulator of polarization of cortical neurons, probably by mediating phosphorylation of microtubule-associated proteins such as MAPT/TAU at 'Thr-529' and 'Ser-579'. Also regulates neuron polarization by mediating phosphorylation of WEE1 at 'Ser-642' in postmitotic neurons, leading to down-regulate WEE1 activity in polarized neurons. Plays a role in the regulation of the mitotic cell cycle progress and the onset of mitosis. Plays a role in the regulation of insulin secretion in response to elevated glucose levels, probably via phosphorylation of CDK16 and PAK1. While BRSK2 phosphorylated at Thr-174 can inhibit insulin secretion, BRSK2 phosphorylated at Thr-260 can promote insulin secretion. Regulates reorganization of the actin cytoskeleton. May play a role in the apoptotic response triggered by endoplasmic reticulum (ER) stress. This is Serine/threonine-protein kinase BRSK2 (BRSK2) from Homo sapiens (Human).